A 349-amino-acid chain; its full sequence is Methylthioribose-1-phosphate isomerase (349 aa).

Residues 49–51 (RGA), arginine 93, and glutamine 201 contribute to the substrate site. Residue aspartate 242 is the Proton donor of the active site. 252–253 (NK) is a substrate binding site.

It belongs to the EIF-2B alpha/beta/delta subunits family. MtnA subfamily.

The enzyme catalyses 5-(methylsulfanyl)-alpha-D-ribose 1-phosphate = 5-(methylsulfanyl)-D-ribulose 1-phosphate. It functions in the pathway amino-acid biosynthesis; L-methionine biosynthesis via salvage pathway; L-methionine from S-methyl-5-thio-alpha-D-ribose 1-phosphate: step 1/6. Its function is as follows. Catalyzes the interconversion of methylthioribose-1-phosphate (MTR-1-P) into methylthioribulose-1-phosphate (MTRu-1-P). The chain is Methylthioribose-1-phosphate isomerase from Petrotoga mobilis (strain DSM 10674 / SJ95).